The following is a 1827-amino-acid chain: Sucrase-isomaltase, intestinal (1827 aa).

At 2 to 12 (ARKKFSGLEIS) the chain is on the cytoplasmic side. Phosphoserine; by PKA is present on S7. A helical; Signal-anchor for type II membrane protein membrane pass occupies residues 13-32 (LIVLFVIVTIIAIALIVVLA). Over 33 to 1827 (TKTPAVDEIS…LEEPIEINWS (1795 aa)) the chain is Lumenal. The interval 40–61 (EISDSTSTPATTRVTTNPSDSG) is disordered. Residues 45–55 (TSTPATTRVTT) show a composition bias toward low complexity. The P-type 1 domain maps to 61 to 110 (GKCPNVLNDPVNVRINCIPEQFPTEGICAQRGCCWRPWNDSLIPWCFFVD). 3 disulfide bridges follow: C63/C94, C77/C93, and C88/C106. A glycan (N-linked (GlcNAc...) asparagine) is linked at N99. An isomaltase region spans residues 110 to 1007 (DNHGYNVQDM…DLQLNTANAR (898 aa)). 2 positions are modified to sulfotyrosine: Y237 and Y239. 2 residues coordinate substrate: D264 and D388. Residues Y391 and Y400 each carry the sulfotyrosine modification. 2 N-linked (GlcNAc...) asparagine glycosylation sites follow: N437 and N455. The active-site Nucleophile; for isomaltase activity is the D505. Cysteines 520 and 545 form a disulfide. Residue R588 participates in substrate binding. D604 (for isomaltase activity) is an active-site residue. C635 and C646 are disulfide-bonded. H662 provides a ligand contact to substrate. Sulfotyrosine occurs at positions 667, 763, and 765. N823, N855, N904, and N926 each carry an N-linked (GlcNAc...) asparagine glycan. Residues 932–978 (NQIFSENERFNCYPDADLATEQKCTQRGCVWRTGSSLSKAPECYFPR) form the P-type 2 domain. A sucrase region spans residues 1008–1827 (IKLPSDPIST…LEEPIEINWS (820 aa)). N-linked (GlcNAc...) asparagine glycans are attached at residues N1235, N1303, N1340, and N1354. D1394 serves as the catalytic Nucleophile; for sucrase activity. E1397 functions as the For sucrase activity in the catalytic mechanism. N-linked (GlcNAc...) asparagine glycosylation occurs at N1403. The Proton donor; for isomaltase activity role is filled by D1500. 6 N-linked (GlcNAc...) asparagine glycosylation sites follow: N1535, N1572, N1675, N1748, N1763, and N1815.

This sequence belongs to the glycosyl hydrolase 31 family. In terms of assembly, the resulting sucrase and isomaltase subunits stay associated with one another in a complex by non-covalent linkages. Post-translationally, the precursor is proteolytically cleaved when exposed to pancreatic proteases in the intestinal lumen. In terms of processing, sulfated. Expressed in the poorly differentiated crypt cells of the small intestine as well as in the mature villous cells. Expressed at very low levels in the colon.

It localises to the apical cell membrane. It carries out the reaction Hydrolysis of sucrose and maltose by an alpha-D-glucosidase-type action.. The catalysed reaction is Hydrolysis of (1-&gt;6)-alpha-D-glucosidic linkages in some oligosaccharides produced from starch and glycogen by alpha-amylase, and in isomaltose.. In terms of biological role, plays an important role in the final stage of carbohydrate digestion. Isomaltase activity is specific for both alpha-1,4- and alpha-1,6-oligosaccharides. The polypeptide is Sucrase-isomaltase, intestinal (SI) (Homo sapiens (Human)).